A 428-amino-acid chain; its full sequence is Dihydroorotase (428 aa).

The Zn(2+) site is built by His59 and His61. Residues 61–63 and Asn93 each bind substrate; that span reads HLR. 3 residues coordinate Zn(2+): Asp151, His178, and His231. Substrate is bound at residue Asn277. Position 304 (Asp304) interacts with Zn(2+). Asp304 is an active-site residue. Substrate is bound by residues His308 and 322–323; that span reads FG.

The protein belongs to the metallo-dependent hydrolases superfamily. DHOase family. Class I DHOase subfamily. It depends on Zn(2+) as a cofactor.

The catalysed reaction is (S)-dihydroorotate + H2O = N-carbamoyl-L-aspartate + H(+). Its pathway is pyrimidine metabolism; UMP biosynthesis via de novo pathway; (S)-dihydroorotate from bicarbonate: step 3/3. In terms of biological role, catalyzes the reversible cyclization of carbamoyl aspartate to dihydroorotate. The protein is Dihydroorotase of Bacillus cereus (strain ZK / E33L).